Here is a 508-residue protein sequence, read N- to C-terminus: Catalase (508 aa).

The N-terminal stretch at 1–21 (MHMSKSFLLISMGLASISVHA) is a signal peptide. Catalysis depends on residues histidine 72 and asparagine 145. Tyrosine 353 contacts heme. The span at 373-392 (PKSPVANHNQDGPSNNSTGL) shows a compositional bias: polar residues. The interval 373 to 396 (PKSPVANHNQDGPSNNSTGLGNVD) is disordered.

The protein belongs to the catalase family. The cofactor is heme.

It localises to the periplasm. It catalyses the reaction 2 H2O2 = O2 + 2 H2O. Decomposes hydrogen peroxide into water and oxygen; serves to protect cells from the toxic effects of hydrogen peroxide. This chain is Catalase, found in Vibrio vulnificus (strain CMCP6).